Here is a 92-residue protein sequence, read N- to C-terminus: Large ribosomal subunit protein eL31 (92 aa).

The protein belongs to the eukaryotic ribosomal protein eL31 family.

The chain is Large ribosomal subunit protein eL31 from Halorubrum lacusprofundi (strain ATCC 49239 / DSM 5036 / JCM 8891 / ACAM 34).